The primary structure comprises 759 residues: uncharacterized protein (759 aa).

2 disordered regions span residues 269 to 328 (SQRV…GEEP) and 406 to 759 (LPLR…AQTA). A compositionally biased stretch (basic and acidic residues) spans 289–299 (AGGKEEAERGG). Low complexity predominate over residues 406–415 (LPLRPPSGSG). Positions 417–430 (AARKPGYEKEEGRG) are enriched in basic and acidic residues. Residues 431 to 444 (RATTASATAATSPR) are compositionally biased toward low complexity. 2 stretches are compositionally biased toward basic and acidic residues: residues 469 to 518 (PESE…RGEH) and 525 to 545 (DSGR…EKGT). The segment covering 585–599 (WVPPPHLLFPSPLPS) has biased composition (pro residues). The segment covering 659–680 (SLSSLSSSSSSSSSSSPSYSPS) has biased composition (low complexity). The span at 681–690 (PLSPPSPVSP) shows a compositional bias: pro residues. Composition is skewed to low complexity over residues 691-704 (SSPR…IRSP) and 728-746 (PPFS…PSAP).

This is an uncharacterized protein from Human herpesvirus 6B (strain Z29) (HHV-6 variant B).